A 1066-amino-acid polypeptide reads, in one-letter code: Elongation factor 3 (1066 aa).

6 HEAT repeats span residues 112-149 (FIFE…VMSP), 151-188 (AAQQ…ACPE), 192-229 (ALMP…LISN), 231-268 (DIER…EVDS), 269-306 (ATLA…LVDN), and 312-353 (PFLG…VTGD). An ADP-binding site is contributed by threonine 418. 2 consecutive ABC transporter domains span residues 454–672 (EEGE…YAEL) and 699–1015 (IKMK…KKEE). Residues asparagine 735, glutamate 944, asparagine 947, and histidine 973 each coordinate ADP. Residues 997–1066 (GHDWTESNSK…YDSADELEDL (70 aa)) form a disordered region. The segment covering 1042–1054 (RKAKKDRMARKKA) has biased composition (basic residues).

Belongs to the ABC transporter superfamily. ABCF family. EF3 subfamily.

The protein resides in the cytoplasm. Its subcellular location is the cytosol. The catalysed reaction is ATP + H2O = ADP + phosphate + H(+). It participates in protein biosynthesis; polypeptide chain elongation. Functionally, ribosome-dependent ATPase that functions in cytoplasmic translation elongation. Required for the ATP-dependent release of deacylated tRNA from the ribosomal E-site during protein biosynthesis. Stimulates the eEF1A-dependent binding of aminoacyl-tRNA to the ribosomal A-site, which has reduced affinity for tRNA as long as the E-site is occupied. Assists translation termination by stimulating the release of nascent protein from the ribosome by release factors. The protein is Elongation factor 3 of Mycosarcoma maydis (Corn smut fungus).